Consider the following 578-residue polypeptide: Sulfite reductase [NADPH] hemoprotein beta-component (578 aa).

Polar residues predominate over residues 1–11 (MSANQQSNSQE). Residues 1 to 20 (MSANQQSNSQEVLGEVLGPL) are disordered. [4Fe-4S] cluster is bound by residues C441, C447, C487, and C491. Siroheme is bound at residue C491.

This sequence belongs to the nitrite and sulfite reductase 4Fe-4S domain family. As to quaternary structure, alpha(8)-beta(8). The alpha component is a flavoprotein, the beta component is a hemoprotein. Requires siroheme as cofactor. The cofactor is [4Fe-4S] cluster.

It carries out the reaction hydrogen sulfide + 3 NADP(+) + 3 H2O = sulfite + 3 NADPH + 4 H(+). It participates in sulfur metabolism; hydrogen sulfide biosynthesis; hydrogen sulfide from sulfite (NADPH route): step 1/1. In terms of biological role, component of the sulfite reductase complex that catalyzes the 6-electron reduction of sulfite to sulfide. This is one of several activities required for the biosynthesis of L-cysteine from sulfate. The chain is Sulfite reductase [NADPH] hemoprotein beta-component from Vibrio campbellii (strain ATCC BAA-1116).